A 3365-amino-acid chain; its full sequence is Probable serine/threonine-protein kinase roco9 (3365 aa).

Disordered stretches follow at residues Met1–Lys177, Glu397–Gln497, Pro944–Ser985, Ile1044–Ile1098, and Gln1261–Gly1301. Basic and acidic residues predominate over residues Phe8–Lys27. Composition is skewed to low complexity over residues Leu51–Thr84, Ser100–Ser116, Ser137–Thr169, and Glu397–Pro415. The 195-residue stretch at Thr243–Asn437 folds into the Rho-GAP domain. Positions Pro421–Ser434 are enriched in polar residues. 5 stretches are compositionally biased toward low complexity: residues Asp435–Lys445, Asn457–Gln489, Ser959–Lys974, Ile1044–Asn1096, and Asn1262–Gly1301. Positions Ile804–Phe1484 constitute a Myotubularin phosphatase domain. LRR repeat units lie at residues Ser1510–Phe1526, Ser1527–Leu1549, Ser1550–Leu1572, Lys1576–Leu1599, Ser1600–Met1622, Gln1624–Cys1645, Val1646–Leu1668, Ser1670–Asp1691, Met1697–Met1720, Ser1722–Asn1743, Leu1744–Leu1770, Val1772–Leu1789, Pro1790–Leu1812, Leu1814–Lys1835, Leu1837–Lys1861, and Leu1863–Leu1887. Basic and acidic residues predominate over residues Ser1932 to Lys1947. 4 disordered regions span residues Ser1932 to Lys1963, Asn2190 to Ser2389, Ala2507 to Pro2567, and Ser2674 to Asn2704. 4 stretches are compositionally biased toward low complexity: residues Asn2190–Asn2205, Ser2216–Ser2389, Asn2522–Pro2567, and Gln2676–His2688. In terms of domain architecture, Protein kinase spans Glu3008–Leu3269. ATP-binding positions include Ile3014 to Val3022 and Lys3035. Residue Asp3132 is the Proton acceptor of the active site. The segment covering Gln3311 to Pro3333 has biased composition (low complexity). Residues Gln3311–Asn3365 are disordered. Acidic residues predominate over residues Asp3354 to Asn3365.

It belongs to the protein kinase superfamily. TKL Ser/Thr protein kinase family. ROCO subfamily.

It catalyses the reaction L-seryl-[protein] + ATP = O-phospho-L-seryl-[protein] + ADP + H(+). The enzyme catalyses L-threonyl-[protein] + ATP = O-phospho-L-threonyl-[protein] + ADP + H(+). In Dictyostelium discoideum (Social amoeba), this protein is Probable serine/threonine-protein kinase roco9 (roco9).